Here is a 400-residue protein sequence, read N- to C-terminus: Elongation factor Tu (400 aa).

The 200-residue stretch at 10–209 (KPHINIGTIG…AVDDYIPTPE (200 aa)) folds into the tr-type G domain. A G1 region spans residues 19 to 26 (GHVDHGKT). Residue 19-26 (GHVDHGKT) coordinates GTP. Threonine 26 provides a ligand contact to Mg(2+). The G2 stretch occupies residues 60-64 (GITIS). The G3 stretch occupies residues 81–84 (DCPG). Residues 81–85 (DCPGH) and 136–139 (NKVD) each bind GTP. The tract at residues 136 to 139 (NKVD) is G4. The G5 stretch occupies residues 174 to 176 (SAK).

This sequence belongs to the TRAFAC class translation factor GTPase superfamily. Classic translation factor GTPase family. EF-Tu/EF-1A subfamily. As to quaternary structure, monomer.

Its subcellular location is the cytoplasm. The enzyme catalyses GTP + H2O = GDP + phosphate + H(+). Functionally, GTP hydrolase that promotes the GTP-dependent binding of aminoacyl-tRNA to the A-site of ribosomes during protein biosynthesis. The sequence is that of Elongation factor Tu from Herpetosiphon aurantiacus (Herpetosiphon giganteus).